The following is a 377-amino-acid chain: Chaperone protein DnaJ (377 aa).

A J domain is found at 5 to 70 (DYYQILGIPK…EKRSAYDQYG (66 aa)). The segment at 132–210 (GIKKEIQIPT…CHGQGRVETY (79 aa)) adopts a CR-type zinc-finger fold. Zn(2+)-binding residues include Cys-145, Cys-148, Cys-162, Cys-165, Cys-184, Cys-187, Cys-198, and Cys-201. CXXCXGXG motif repeat units follow at residues 145–152 (CKTCYGSG), 162–169 (CSTCHGKG), 184–191 (CPTCHGKG), and 198–205 (CNLCHGQG).

Belongs to the DnaJ family. As to quaternary structure, homodimer. The cofactor is Zn(2+).

It localises to the cytoplasm. In terms of biological role, participates actively in the response to hyperosmotic and heat shock by preventing the aggregation of stress-denatured proteins and by disaggregating proteins, also in an autonomous, DnaK-independent fashion. Unfolded proteins bind initially to DnaJ; upon interaction with the DnaJ-bound protein, DnaK hydrolyzes its bound ATP, resulting in the formation of a stable complex. GrpE releases ADP from DnaK; ATP binding to DnaK triggers the release of the substrate protein, thus completing the reaction cycle. Several rounds of ATP-dependent interactions between DnaJ, DnaK and GrpE are required for fully efficient folding. Also involved, together with DnaK and GrpE, in the DNA replication of plasmids through activation of initiation proteins. This is Chaperone protein DnaJ from Buchnera aphidicola subsp. Acyrthosiphon pisum (strain 5A).